A 359-amino-acid polypeptide reads, in one-letter code: Peptide chain release factor 1 (359 aa).

Glutamine 238 is subject to N5-methylglutamine.

This sequence belongs to the prokaryotic/mitochondrial release factor family. Post-translationally, methylated by PrmC. Methylation increases the termination efficiency of RF1.

Its subcellular location is the cytoplasm. Peptide chain release factor 1 directs the termination of translation in response to the peptide chain termination codons UAG and UAA. This chain is Peptide chain release factor 1, found in Rhodococcus jostii (strain RHA1).